The chain runs to 142 residues: Taurine up-regulated 1 protein (142 aa).

Residues 1–40 form the signal peptide; that stretch reads MARPPPLPGLVGRRSGRAVDRAIGWRLFLLLWHPALGAQA. Residues 41 to 123 are Extracellular-facing; that stretch reads RPPRRAPGGR…ARTQLEGQEG (83 aa). A helical transmembrane segment spans residues 124–140; it reads AGGWLVVGFLLCLFLLM. Over 141-142 the chain is Cytoplasmic; sequence PP.

In terms of tissue distribution, widely expressed in the adult with highest levels in placenta and testis. Also expressed in a number of embryonic tissues at multiple embryonic stages.

The protein localises to the nucleus membrane. Its subcellular location is the mitochondrion membrane. The protein resides in the cytoplasm. In Mus musculus (Mouse), this protein is Taurine up-regulated 1 protein.